A 233-amino-acid chain; its full sequence is Nickel import system ATP-binding protein NikE (233 aa).

The 227-residue stretch at 2-228 (IELKHVTFGY…DRHPYTKELV (227 aa)) folds into the ABC transporter domain. 35 to 42 (GESGCGKS) serves as a coordination point for ATP.

The protein belongs to the ABC transporter superfamily. As to quaternary structure, the complex is composed of two ATP-binding proteins (NikD and NikE), two transmembrane proteins (NikB and NikC) and a solute-binding protein (NikA).

It is found in the cell membrane. It carries out the reaction Ni(2+)(out) + ATP + H2O = Ni(2+)(in) + ADP + phosphate + H(+). Functionally, part of the ABC transporter complex NikABCDE (Opp2) involved in nickel import. Probably responsible for energy coupling to the transport system. In Staphylococcus aureus (strain MRSA252), this protein is Nickel import system ATP-binding protein NikE.